A 380-amino-acid polypeptide reads, in one-letter code: Cytochrome b (380 aa).

4 helical membrane passes run 33–53, 77–98, 113–133, and 178–198; these read FGSL…FLAM, WLIR…YLHI, WNVG…GYVL, and FFAF…LHLL. Residues His-83 and His-97 each contribute to the heme b site. Heme b contacts are provided by His-182 and His-196. His-201 lines the a ubiquinone pocket. The next 4 membrane-spanning stretches (helical) occupy residues 226–246, 288–308, 320–340, and 347–367; these read YKDL…ALFS, LGGV…PFLH, ASQF…WIGG, and FIII…VLFP.

Belongs to the cytochrome b family. The cytochrome bc1 complex contains 3 respiratory subunits (MT-CYB, CYC1 and UQCRFS1), 2 core proteins (UQCRC1 and UQCRC2) and probably 6 low-molecular weight proteins. It depends on heme b as a cofactor.

The protein localises to the mitochondrion inner membrane. Component of the ubiquinol-cytochrome c reductase complex (complex III or cytochrome b-c1 complex) that is part of the mitochondrial respiratory chain. The b-c1 complex mediates electron transfer from ubiquinol to cytochrome c. Contributes to the generation of a proton gradient across the mitochondrial membrane that is then used for ATP synthesis. This Scomber scombrus (Atlantic mackerel) protein is Cytochrome b (mt-cyb).